Here is a 217-residue protein sequence, read N- to C-terminus: Small ribosomal subunit protein uS3c (217 aa).

A KH type-2 domain is found at 39-109 (IRNFLRTKLI…RFRITITYIP (71 aa)).

This sequence belongs to the universal ribosomal protein uS3 family. In terms of assembly, part of the 30S ribosomal subunit.

Its subcellular location is the plastid. It is found in the chloroplast. The chain is Small ribosomal subunit protein uS3c (rps3) from Chlorokybus atmophyticus (Soil alga).